Here is a 378-residue protein sequence, read N- to C-terminus: Transmembrane protein adipocyte-associated 1 homolog (378 aa).

N-linked (GlcNAc...) asparagine glycans are attached at residues N16, N25, and N36. A run of 7 helical transmembrane segments spans residues 61–81 (VMLLIPNVAFLVFLMWKLPSA), 88–108 (TSSPIFVAFYILVFVVAAVGI), 136–156 (FFLLAIELSVIILGLAFGHLE), 164–184 (VLAITAVLSLAYSITQGTLEI), 205–225 (HFWLASSCFFFLVYSLIVILP), 247–267 (ILALLNLVQGLGSALLCADII), and 278–298 (FLYFSVFAPLIYVTFLKGFFG). The disordered stretch occupies residues 316–335 (DSDVHLPHTSSSGLGRKDLD).

The protein belongs to the UPF0359 family.

It is found in the membrane. This Danio rerio (Zebrafish) protein is Transmembrane protein adipocyte-associated 1 homolog (tpra1).